The chain runs to 382 residues: Carbamoyl phosphate synthase small chain (382 aa).

Residues 1–189 form a CPSase region; that stretch reads MIKSALLVLE…GLPEAKSEDD (189 aa). Residues Ser-47, Gly-241, and Gly-243 each coordinate L-glutamine. Residues 193-380 enclose the Glutamine amidotransferase type-1 domain; that stretch reads HVVAYDFGAK…IELIEQYRQS (188 aa). Residue Cys-269 is the Nucleophile of the active site. The L-glutamine site is built by Leu-270, Gln-273, Asn-311, Gly-313, and Phe-314. Residues His-353 and Glu-355 contribute to the active site.

The protein belongs to the CarA family. In terms of assembly, composed of two chains; the small (or glutamine) chain promotes the hydrolysis of glutamine to ammonia, which is used by the large (or ammonia) chain to synthesize carbamoyl phosphate. Tetramer of heterodimers (alpha,beta)4.

It carries out the reaction hydrogencarbonate + L-glutamine + 2 ATP + H2O = carbamoyl phosphate + L-glutamate + 2 ADP + phosphate + 2 H(+). The enzyme catalyses L-glutamine + H2O = L-glutamate + NH4(+). It participates in amino-acid biosynthesis; L-arginine biosynthesis; carbamoyl phosphate from bicarbonate: step 1/1. The protein operates within pyrimidine metabolism; UMP biosynthesis via de novo pathway; (S)-dihydroorotate from bicarbonate: step 1/3. Its function is as follows. Small subunit of the glutamine-dependent carbamoyl phosphate synthetase (CPSase). CPSase catalyzes the formation of carbamoyl phosphate from the ammonia moiety of glutamine, carbonate, and phosphate donated by ATP, constituting the first step of 2 biosynthetic pathways, one leading to arginine and/or urea and the other to pyrimidine nucleotides. The small subunit (glutamine amidotransferase) binds and cleaves glutamine to supply the large subunit with the substrate ammonia. This chain is Carbamoyl phosphate synthase small chain, found in Salmonella typhimurium (strain LT2 / SGSC1412 / ATCC 700720).